Reading from the N-terminus, the 940-residue chain is Isoleucine--tRNA ligase (940 aa).

The short motif at proline 58 to histidine 68 is the 'HIGH' region element. Glutamate 564 is a binding site for L-isoleucyl-5'-AMP. The 'KMSKS' region motif lies at lysine 605 to serine 609. Lysine 608 contacts ATP. Zn(2+) is bound by residues cysteine 903, cysteine 906, cysteine 923, and cysteine 926.

It belongs to the class-I aminoacyl-tRNA synthetase family. IleS type 1 subfamily. As to quaternary structure, monomer. Zn(2+) serves as cofactor.

The protein localises to the cytoplasm. The catalysed reaction is tRNA(Ile) + L-isoleucine + ATP = L-isoleucyl-tRNA(Ile) + AMP + diphosphate. Functionally, catalyzes the attachment of isoleucine to tRNA(Ile). As IleRS can inadvertently accommodate and process structurally similar amino acids such as valine, to avoid such errors it has two additional distinct tRNA(Ile)-dependent editing activities. One activity is designated as 'pretransfer' editing and involves the hydrolysis of activated Val-AMP. The other activity is designated 'posttransfer' editing and involves deacylation of mischarged Val-tRNA(Ile). This Shewanella sp. (strain ANA-3) protein is Isoleucine--tRNA ligase.